The following is a 207-amino-acid chain: MRPLTARQQEVLDLLKRHLETTGMPPTRAEISRELGFKSANAAEEHLKALSRKGAIEIIPGASRGIRILDNSSNDEFDGLPLVGRVAAGEPILAEQHIEATYRVDADMFKPQADFLLKVYGLSMKNVGILDGDLLAVHSTKDVRNGQIVVARIEDEVTVKRLEKKGSIIYLHAENEEFDPIVVNLEEQKNFEIEGIAVGIIRNNAWM.

The segment at residues 28–48 (RAEISRELGFKSANAAEEHLK) is a DNA-binding region (H-T-H motif). Residues Ser123 and Lys160 each act as for autocatalytic cleavage activity in the active site.

It belongs to the peptidase S24 family. As to quaternary structure, homodimer.

The enzyme catalyses Hydrolysis of Ala-|-Gly bond in repressor LexA.. Represses a number of genes involved in the response to DNA damage (SOS response), including recA and lexA. In the presence of single-stranded DNA, RecA interacts with LexA causing an autocatalytic cleavage which disrupts the DNA-binding part of LexA, leading to derepression of the SOS regulon and eventually DNA repair. The sequence is that of LexA repressor from Haemophilus influenzae (strain 86-028NP).